The chain runs to 1373 residues: DNA-directed RNA polymerase subunit beta (1373 aa).

It belongs to the RNA polymerase beta chain family. In terms of assembly, the RNAP catalytic core consists of 2 alpha, 1 beta, 1 beta' and 1 omega subunit. When a sigma factor is associated with the core the holoenzyme is formed, which can initiate transcription.

It catalyses the reaction RNA(n) + a ribonucleoside 5'-triphosphate = RNA(n+1) + diphosphate. In terms of biological role, DNA-dependent RNA polymerase catalyzes the transcription of DNA into RNA using the four ribonucleoside triphosphates as substrates. The protein is DNA-directed RNA polymerase subunit beta of Rickettsia felis (strain ATCC VR-1525 / URRWXCal2) (Rickettsia azadi).